The sequence spans 233 residues: Large ribosomal subunit protein uL3 (233 aa).

This sequence belongs to the universal ribosomal protein uL3 family. In terms of assembly, part of the 50S ribosomal subunit. Forms a cluster with proteins L14 and L19.

Functionally, one of the primary rRNA binding proteins, it binds directly near the 3'-end of the 23S rRNA, where it nucleates assembly of the 50S subunit. This chain is Large ribosomal subunit protein uL3, found in Ureaplasma urealyticum serovar 10 (strain ATCC 33699 / Western).